The primary structure comprises 731 residues: 1,4-alpha-glucan branching enzyme GlgB 2 (731 aa).

D410 serves as the catalytic Nucleophile. E463 functions as the Proton donor in the catalytic mechanism.

This sequence belongs to the glycosyl hydrolase 13 family. GlgB subfamily. As to quaternary structure, monomer.

The catalysed reaction is Transfers a segment of a (1-&gt;4)-alpha-D-glucan chain to a primary hydroxy group in a similar glucan chain.. Its pathway is glycan biosynthesis; glycogen biosynthesis. Its function is as follows. Catalyzes the formation of the alpha-1,6-glucosidic linkages in glycogen by scission of a 1,4-alpha-linked oligosaccharide from growing alpha-1,4-glucan chains and the subsequent attachment of the oligosaccharide to the alpha-1,6 position. The polypeptide is 1,4-alpha-glucan branching enzyme GlgB 2 (Xanthomonas oryzae pv. oryzae (strain MAFF 311018)).